The chain runs to 442 residues: MKEQKKVFIKTLGCQMNEYDSQKMHEVLDEHFHTVKTDDYKEADIILINTCSIREKAQEKVFHELGRWKNLKKKKEDLVIGVGGCVASQEGENIIKRAPFVDLVFGPQTIHRLPEMIKRKQSTQESQVDISFPEVEKFDFLPEPKAEGAKAYVSIMEGCDKYCSYCVVPYTRGPEVNRPFEDVLGECAALAEQGVKEITLLGQNVNHYLGPMENGETADLALLIHFIAEIDGIERIRFTTSHPVEFSQNLIDAYGSVPELANHLHLPVQHGSDRVLINMKRNHTILEFKQKIRKLRAIRPDITISSDFIVGFPGETEEDFQKLMDLVKDVNFDQSFSFIYSKRPGTPAADLPDDTPMEVKKDRLKRLQDLLNSNAQIISRQMVGTEQRILVEGTSKKDDNVLAGRTENNRIVNFIGDKSLIGQFAMVKITESLPNSLRGELI.

The 118-residue stretch at 5 to 122 (KKVFIKTLGC…LPEMIKRKQS (118 aa)) folds into the MTTase N-terminal domain. The [4Fe-4S] cluster site is built by Cys14, Cys51, Cys85, Cys159, Cys163, and Cys166. The Radical SAM core domain maps to 145-378 (KAEGAKAYVS…DLLNSNAQII (234 aa)). Residues 380 to 442 (RQMVGTEQRI…LPNSLRGELI (63 aa)) enclose the TRAM domain.

Belongs to the methylthiotransferase family. MiaB subfamily. As to quaternary structure, monomer. The cofactor is [4Fe-4S] cluster.

It is found in the cytoplasm. It catalyses the reaction N(6)-dimethylallyladenosine(37) in tRNA + (sulfur carrier)-SH + AH2 + 2 S-adenosyl-L-methionine = 2-methylsulfanyl-N(6)-dimethylallyladenosine(37) in tRNA + (sulfur carrier)-H + 5'-deoxyadenosine + L-methionine + A + S-adenosyl-L-homocysteine + 2 H(+). In terms of biological role, catalyzes the methylthiolation of N6-(dimethylallyl)adenosine (i(6)A), leading to the formation of 2-methylthio-N6-(dimethylallyl)adenosine (ms(2)i(6)A) at position 37 in tRNAs that read codons beginning with uridine. The sequence is that of tRNA-2-methylthio-N(6)-dimethylallyladenosine synthase from Francisella philomiragia subsp. philomiragia (strain ATCC 25017 / CCUG 19701 / FSC 153 / O#319-036).